Here is a 631-residue protein sequence, read N- to C-terminus: tRNA uridine 5-carboxymethylaminomethyl modification enzyme MnmG (631 aa).

Residue 15–20 coordinates FAD; it reads GAGHAG. A disordered region spans residues 203–232; the sequence is TPPRVDGNTVDYSKTQEEPGDKEPRHFSYT. Residues 216–232 show a composition bias toward basic and acidic residues; that stretch reads KTQEEPGDKEPRHFSYT. Residue 276 to 290 coordinates NAD(+); sequence GPRYCPSIEDKVVRF.

It belongs to the MnmG family. As to quaternary structure, homodimer. Heterotetramer of two MnmE and two MnmG subunits. It depends on FAD as a cofactor.

The protein localises to the cytoplasm. Its function is as follows. NAD-binding protein involved in the addition of a carboxymethylaminomethyl (cmnm) group at the wobble position (U34) of certain tRNAs, forming tRNA-cmnm(5)s(2)U34. The protein is tRNA uridine 5-carboxymethylaminomethyl modification enzyme MnmG of Lactobacillus gasseri (strain ATCC 33323 / DSM 20243 / BCRC 14619 / CIP 102991 / JCM 1131 / KCTC 3163 / NCIMB 11718 / NCTC 13722 / AM63).